A 1040-amino-acid polypeptide reads, in one-letter code: Contactin-2 (1040 aa).

The first 30 residues, 1-30 (MGAPARKRASLLLLLLATMALVSSPGWSFS), serve as a signal peptide directing secretion. Ig-like C2-type domains are found at residues 39-130 (PVFE…AVLR), 135-224 (QEFS…SVFS), 241-324 (PSIK…GRII), 329-413 (PEWL…AELA), 419-506 (PDFR…GILS), and 511-605 (TKIT…ATVL). 4 cysteine pairs are disulfide-bonded: cysteine 63/cysteine 113, cysteine 157/cysteine 209, cysteine 263/cysteine 308, and cysteine 350/cysteine 397. 3 N-linked (GlcNAc...) asparagine glycosylation sites follow: asparagine 78, asparagine 200, and asparagine 206. Asparagine 463, asparagine 479, asparagine 500, and asparagine 527 each carry an N-linked (GlcNAc...) asparagine glycan. 4 consecutive Fibronectin type-III domains span residues 612 to 710 (PPGG…TKEA), 715 to 812 (APSG…SAEE), 817 to 913 (APAK…MKPP), and 917 to 1008 (PPGN…NGGT). The N-linked (GlcNAc...) asparagine glycan is linked to asparagine 777. The Cell attachment site motif lies at 796 to 798 (RGD). Residues asparagine 832, asparagine 920, and asparagine 942 are each glycosylated (N-linked (GlcNAc...) asparagine). The interval 897–922 (GTGPASPSADAMTMKPPPRRPPGNIS) is disordered. Serine 1014 carries GPI-anchor amidated serine lipidation. Residues 1015-1040 (SAVRPAHPGPVFSCMVILMLAGCQRL) constitute a propeptide, removed in mature form.

Belongs to the immunoglobulin superfamily. Contactin family.

The protein resides in the cell membrane. Functionally, in conjunction with another transmembrane protein, CNTNAP2, contributes to the organization of axonal domains at nodes of Ranvier by maintaining voltage-gated potassium channels at the juxtaparanodal region. In Mus musculus (Mouse), this protein is Contactin-2 (Cntn2).